A 322-amino-acid polypeptide reads, in one-letter code: MVTIDNSMTATQLNDLPQTAQLRKNAQPELGLVCITFDKKVRFRTMTRTRYLKLSLAQRESSLREIYLHNLQCLHDALTFCQENNLRLYRISSALFPLSDMEDQIGSNILEEISTDLGKIGERSQALNIRMVLHPDQYVVLSSDSPEIVQTSIKILERHARTFDLLGLPRSPWSLMNIHGGKSQRSEQLIKVISNLPENIKSRLTLENDEYAYSTEEIFNVCQKAQIPMVFDAHHQICHENLDSYDHPSVAAMFYAARETWTNPEWQLVHISNGEQAFNDRKHSNLITNMPNIYRQAPWIEVEAKHKEVAIAHLRSWWLMGQ.

The protein belongs to the uve1/UvsE family.

In terms of biological role, component in a DNA repair pathway. Removal of UV LIGHT damaged nucleotides. Recognizes pyrimidine dimers and cleave a phosphodiester bond immediately 5' to the lesion. This Nostoc sp. (strain PCC 7120 / SAG 25.82 / UTEX 2576) protein is UV DNA damage endonuclease.